A 144-amino-acid chain; its full sequence is MLMPKRVKYRREHRGKMRGRAKGGTEVHFGEYGIQAQESSWITNRQIEAARIAMTRYMKRGGKVWIKIFPSKPYTAKPLEVRMGSGKGAPEGWVAVVKPGKVLFEISGVSEEVAREALRLASHKLPIKTKFVKREEIGGESNES.

This sequence belongs to the universal ribosomal protein uL16 family. As to quaternary structure, part of the 50S ribosomal subunit.

Its function is as follows. Binds 23S rRNA and is also seen to make contacts with the A and possibly P site tRNAs. The chain is Large ribosomal subunit protein uL16 from Bacillus licheniformis (strain ATCC 14580 / DSM 13 / JCM 2505 / CCUG 7422 / NBRC 12200 / NCIMB 9375 / NCTC 10341 / NRRL NRS-1264 / Gibson 46).